We begin with the raw amino-acid sequence, 74 residues long: UPF0435 protein GTNG_0390 (74 aa).

It belongs to the UPF0435 family.

The chain is UPF0435 protein GTNG_0390 from Geobacillus thermodenitrificans (strain NG80-2).